We begin with the raw amino-acid sequence, 528 residues long: Movement protein TGB1 (528 aa).

Residues 1–13 (MDMTKTVEEKKTN) show a composition bias toward basic and acidic residues. The interval 1-143 (MDMTKTVEEK…TKGSSQVGEN (143 aa)) is disordered. 2 tandem repeats follow at residues 52-77 (VADQTPLSVDNGAKSKLDSSDRQVPG) and 78-103 (VADQTPLSVDNGAKSKLDSSDRQVPG). Positions 52–103 (VADQTPLSVDNGAKSKLDSSDRQVPGVADQTPLSVDNGAKSKLDSSDRQVPG) are 2 X 26 AA tandem repeats. The interaction with the suppressor of RNA silencing Gamma-B stretch occupies residues 75-491 (VPGVADQTPL…KSKLIIRADA (417 aa)). Over residues 109–119 (NVKKSKKKRIQ) the composition is skewed to basic residues. The interval 111–120 (KKSKKKRIQK) is nucleolar localization signal. The 144-residue stretch at 236-379 (ARACTLERER…YLTLPVIYRS (144 aa)) folds into the (+)RNA virus helicase ATP-binding domain. A nuclear localization signal region spans residues 243–254 (RERLKRKLLLVR). 269–276 (GVPGSGKS) contacts ATP. Positions 380 to 520 (ETTYRLGQET…SHRYSAKPDE (141 aa)) constitute a (+)RNA virus helicase C-terminal domain. Residues 508-528 (ASNSHRYSAKPDEDHSWFKAK) form a disordered region. The span at 516 to 528 (AKPDEDHSWFKAK) shows a compositional bias: basic and acidic residues.

Belongs to the virgaviridae/benyvirus TGB1 movement protein family. As to quaternary structure, homooligomer. Interacts with movement protein TGB3. TGB1-TGB3-TGB2 complex formation is enhanced by ATP hydrolysis. Interacts with the suppressor of RNA silencing Gamma-B (via N-terminus). It depends on Mg(2+) as a cofactor.

It localises to the host cell junction. Its subcellular location is the host plasmodesma. The protein resides in the host nucleus. It is found in the host cytoplasm. The protein localises to the host nucleolus. It localises to the host cytoskeleton. It carries out the reaction ATP + H2O = ADP + phosphate + H(+). Its activity is regulated as follows. ATPase activity is enhanced by the suppressor of RNA silencing Gamma-B. Functionally, participates in the transport of viral genome to neighboring plant cells directly through plasmodesmata, without any budding. Multifunctional movement protein with RNA-binding, ATPase and helicase activities. Engages in homologous interactions leading to the formation of a ribonucleoprotein complex containing plus-sense viral RNAs (vRNPs). ATPase activity is probably required for vRNPs movement complex assembly. Intracellular delivery of TGBp1-containing vRNPs to plasmodesmata is facilitated by TGBp2 and TGBp3. The protein is Movement protein TGB1 of Barley stripe mosaic virus (BSMV).